The sequence spans 228 residues: Fibrillarin-like rRNA/tRNA 2'-O-methyltransferase (228 aa).

Residues 85-86 (TT), 103-104 (EF), 128-129 (DA), and 148-151 (DVAQ) contribute to the S-adenosyl-L-methionine site.

It belongs to the methyltransferase superfamily. Fibrillarin family. In terms of assembly, interacts with nop5. Component of box C/D small ribonucleoprotein (sRNP) particles that contain rpl7ae, FlpA and nop5, plus a guide RNA.

Functionally, involved in pre-rRNA and tRNA processing. Utilizes the methyl donor S-adenosyl-L-methionine to catalyze the site-specific 2'-hydroxyl methylation of ribose moieties in rRNA and tRNA. Site specificity is provided by a guide RNA that base pairs with the substrate. Methylation occurs at a characteristic distance from the sequence involved in base pairing with the guide RNA. The sequence is that of Fibrillarin-like rRNA/tRNA 2'-O-methyltransferase from Methanococcus voltae.